Consider the following 304-residue polypeptide: Protoheme IX farnesyltransferase 1 (304 aa).

The next 8 membrane-spanning stretches (helical) occupy residues 24 to 44 (VVVLMLITSLIGMLLATKAPL), 47 to 67 (FVPWQVLIFGNLGIGLCAGAA), 99 to 119 (MALGFALLLALAGMAVLLAFT), 122 to 142 (LTAWLTLASLLGYAALYTGFL), 150 to 170 (IVIGGLAGAAPPLLGWVAITG), 176 to 196 (PLLLVLIIFAWTPPHFWALCI), 228 to 248 (LVLFAVSLMPFVIHMSGLVYL), and 280 to 300 (YSIVYLFLLFMALLVDHYLPL).

The protein belongs to the UbiA prenyltransferase family. Protoheme IX farnesyltransferase subfamily.

Its subcellular location is the cell inner membrane. The catalysed reaction is heme b + (2E,6E)-farnesyl diphosphate + H2O = Fe(II)-heme o + diphosphate. It participates in porphyrin-containing compound metabolism; heme O biosynthesis; heme O from protoheme: step 1/1. Converts heme B (protoheme IX) to heme O by substitution of the vinyl group on carbon 2 of heme B porphyrin ring with a hydroxyethyl farnesyl side group. The protein is Protoheme IX farnesyltransferase 1 of Pseudomonas aeruginosa (strain UCBPP-PA14).